We begin with the raw amino-acid sequence, 226 residues long: SPI-1 type 3 secretion system stator protein (226 aa).

In terms of assembly, the core secretion machinery of the T3SS is composed of approximately 20 different proteins, including cytoplasmic components, a base, an export apparatus and a needle. This subunit is part of the cytosolic complex. Interacts directly with InvC/SctN1 (T3SS-1 ATPase) and SpaO/SctQ (the major sorting platform component).

The protein resides in the cytoplasm. In terms of biological role, component of the type III secretion system (T3SS), also called injectisome, which is used to inject bacterial effector proteins into eukaryotic host cells. Acts as a regulator of the InvC/SctN1 ATPase activity. Required for invasion and secretion. The sequence is that of SPI-1 type 3 secretion system stator protein from Salmonella typhimurium (strain SL1344).